Here is a 1103-residue protein sequence, read N- to C-terminus: Coatomer subunit beta (1103 aa).

HEAT repeat units follow at residues 51-89 (EAYTRLLMTVIRYAMPSKDKRVKKLTQLYLEIVGKCRPD), 94-129 (EEMILICNALRNDLMSPNEYVRGSTLRLLSKIRQFK), 130-166 (VLEPLVEAILQNLTHRHSYVRRNAVMCVYSIVKNFGL), 247-284 (QQKAGLLRLIVSILPNTLPSVAYEGACSLLALSRAPVS), 322-359 (RTMEEFVIDLLRGLQTPSLEVRRKILDLVLQIVGKNSV), 365-404 (VLKRELLRTAEPEQLTVPRTMEYRRLLIKAVHSCCTRFPE), and 405-441 (AAASVVNVLIDFPGDPDVTTATEVAVVVRELVATCVH).

In terms of assembly, oligomeric complex that consists of at least the alpha, beta, beta', gamma, delta, epsilon and zeta subunits.

The protein localises to the cytoplasm. The protein resides in the golgi apparatus membrane. It localises to the cytoplasmic vesicle. It is found in the COPI-coated vesicle membrane. Functionally, the coatomer is a cytosolic protein complex that binds to dilysine motifs and reversibly associates with Golgi non-clathrin-coated vesicles, which further mediate biosynthetic protein transport from the ER, via the Golgi up to the trans Golgi network. Coatomer complex is required for budding from Golgi membranes, and is essential for the retrograde Golgi-to-ER transport of dilysine-tagged proteins. The protein is Coatomer subunit beta of Toxoplasma gondii.